The sequence spans 267 residues: Putative hydro-lyase RALTA_B1245 (267 aa).

Belongs to the D-glutamate cyclase family.

The protein is Putative hydro-lyase RALTA_B1245 of Cupriavidus taiwanensis (strain DSM 17343 / BCRC 17206 / CCUG 44338 / CIP 107171 / LMG 19424 / R1) (Ralstonia taiwanensis (strain LMG 19424)).